Here is an 885-residue protein sequence, read N- to C-terminus: Leucine--tRNA ligase (885 aa).

The short motif at 53-63 (PYPSGKLHMGH) is the 'HIGH' region element. The 'KMSKS' region signature appears at 631–635 (KMSKS). Residue K634 coordinates ATP.

This sequence belongs to the class-I aminoacyl-tRNA synthetase family.

The protein localises to the cytoplasm. It catalyses the reaction tRNA(Leu) + L-leucine + ATP = L-leucyl-tRNA(Leu) + AMP + diphosphate. This Psychrobacter sp. (strain PRwf-1) protein is Leucine--tRNA ligase.